The chain runs to 89 residues: Putative regulatory protein BPUM_1466 (89 aa).

The protein belongs to the RemA family.

The sequence is that of Putative regulatory protein BPUM_1466 from Bacillus pumilus (strain SAFR-032).